The sequence spans 388 residues: MNRRLVILVADSAGCGALPDAAAYGDAGSDTLGNTSRAVGGLSLPVLGRMGLGHVTAIQGVPPDPAPTAFHGRMAERSEGKDTTTGHWEMMGVVLRQGLRTFPGGFPPEIVEAFVRETGAPGVLGNTVASGTVIIQELGEEHQRTGKPIVYTSADSVFQVAAHTDTVPLETLYAWCRTARRILDPWRVARVIARPFVGAPGKYARTYDRKDFSMPPPATTVLERLVEAGVPVVGVGKIPDIFDRRGITEEIHTAGNADGLARTAALLDRVDRGLVFVNLVDFDMLYGHRNDPAGYARALEELDRALPAILDRLGPGDLLALTADHGCDPTTPSTDHSREHVPLLVYAPGRGGGDLGTRTTFADLGATVAEYFGVRSDVGTSFLAEVTR.

6 residues coordinate Mn(2+): D11, D283, H288, D324, H325, and H336.

This sequence belongs to the phosphopentomutase family. Mn(2+) is required as a cofactor.

Its subcellular location is the cytoplasm. The enzyme catalyses 2-deoxy-alpha-D-ribose 1-phosphate = 2-deoxy-D-ribose 5-phosphate. It carries out the reaction alpha-D-ribose 1-phosphate = D-ribose 5-phosphate. It functions in the pathway carbohydrate degradation; 2-deoxy-D-ribose 1-phosphate degradation; D-glyceraldehyde 3-phosphate and acetaldehyde from 2-deoxy-alpha-D-ribose 1-phosphate: step 1/2. Isomerase that catalyzes the conversion of deoxy-ribose 1-phosphate (dRib-1-P) and ribose 1-phosphate (Rib-1-P) to deoxy-ribose 5-phosphate (dRib-5-P) and ribose 5-phosphate (Rib-5-P), respectively. This is Phosphopentomutase from Anaeromyxobacter sp. (strain K).